The sequence spans 672 residues: tRNA 5-methylaminomethyl-2-thiouridine biosynthesis bifunctional protein MnmC (672 aa).

The tRNA (mnm(5)s(2)U34)-methyltransferase stretch occupies residues 1-243; sequence MTSIKNAELG…KREMIAGSME (243 aa). The FAD-dependent cmnm(5)s(2)U34 oxidoreductase stretch occupies residues 269 to 672; sequence IGGGIASAAL…LRKGKAITEL (404 aa).

The protein in the N-terminal section; belongs to the methyltransferase superfamily. tRNA (mnm(5)s(2)U34)-methyltransferase family. In the C-terminal section; belongs to the DAO family. FAD serves as cofactor.

The protein resides in the cytoplasm. The enzyme catalyses 5-aminomethyl-2-thiouridine(34) in tRNA + S-adenosyl-L-methionine = 5-methylaminomethyl-2-thiouridine(34) in tRNA + S-adenosyl-L-homocysteine + H(+). Catalyzes the last two steps in the biosynthesis of 5-methylaminomethyl-2-thiouridine (mnm(5)s(2)U) at the wobble position (U34) in tRNA. Catalyzes the FAD-dependent demodification of cmnm(5)s(2)U34 to nm(5)s(2)U34, followed by the transfer of a methyl group from S-adenosyl-L-methionine to nm(5)s(2)U34, to form mnm(5)s(2)U34. In Vibrio campbellii (strain ATCC BAA-1116), this protein is tRNA 5-methylaminomethyl-2-thiouridine biosynthesis bifunctional protein MnmC.